A 469-amino-acid chain; its full sequence is UDP-N-acetylmuramate--L-alanine ligase (469 aa).

113-119 (GTHGKTT) contributes to the ATP binding site.

Belongs to the MurCDEF family.

The protein resides in the cytoplasm. It carries out the reaction UDP-N-acetyl-alpha-D-muramate + L-alanine + ATP = UDP-N-acetyl-alpha-D-muramoyl-L-alanine + ADP + phosphate + H(+). It functions in the pathway cell wall biogenesis; peptidoglycan biosynthesis. Functionally, cell wall formation. This is UDP-N-acetylmuramate--L-alanine ligase from Neisseria meningitidis serogroup A / serotype 4A (strain DSM 15465 / Z2491).